The primary structure comprises 302 residues: uncharacterized protein (302 aa).

This is an uncharacterized protein from Ictaluridae (bullhead catfishes).